The primary structure comprises 385 residues: Probable thioesterase PNKD (385 aa).

Residues 31-42 (NKASQNRSRALQ) show a composition bias toward polar residues. Residues 31–57 (NKASQNRSRALQSHSSPECKEEPEPLS) form a disordered region. Zn(2+) contacts are provided by H172, H174, D176, H177, H229, D253, and H291.

The protein belongs to the metallo-beta-lactamase superfamily. Glyoxalase II family. It depends on Zn(2+) as a cofactor. In terms of processing, undergoes cleavage at the N-terminus.

It localises to the cell membrane. The protein localises to the mitochondrion. The enzyme catalyses a thioester + H2O = a thiol + a carboxylate + H(+). In terms of biological role, probable thioesterase that may play a role in cellular detoxification processes; it likely acts on a yet-unknown alpha-hydroxythioester substrate. In vitro, it is able to catalyze the hydrolysis of S-D-lactoyl-glutathione to form glutathione and D-lactic acid at very low rate, though this reaction is not physiologically relevant in vivo. The protein is Probable thioesterase PNKD (PNKD) of Bos taurus (Bovine).